We begin with the raw amino-acid sequence, 239 residues long: Uridylate kinase (239 aa).

Residue 13 to 16 participates in ATP binding; the sequence is KVSG. Gly55 contributes to the UMP binding site. Residues Gly56 and Arg60 each coordinate ATP. Residues Asp75 and 136-143 contribute to the UMP site; that span reads TGNPFFTT. Positions 163, 164, 169, and 172 each coordinate ATP.

Belongs to the UMP kinase family. As to quaternary structure, homohexamer.

Its subcellular location is the cytoplasm. The catalysed reaction is UMP + ATP = UDP + ADP. It functions in the pathway pyrimidine metabolism; CTP biosynthesis via de novo pathway; UDP from UMP (UMPK route): step 1/1. With respect to regulation, inhibited by UTP. Catalyzes the reversible phosphorylation of UMP to UDP. The chain is Uridylate kinase from Bartonella bacilliformis (strain ATCC 35685 / KC583 / Herrer 020/F12,63).